Here is a 141-residue protein sequence, read N- to C-terminus: Large ribosomal subunit protein uL11c (141 aa).

It belongs to the universal ribosomal protein uL11 family. As to quaternary structure, part of the ribosomal stalk of the 50S ribosomal subunit. Interacts with L10 and the large rRNA to form the base of the stalk. L10 forms an elongated spine to which L12 dimers bind in a sequential fashion forming a multimeric L10(L12)X complex.

The protein resides in the plastid. The protein localises to the chloroplast. In terms of biological role, forms part of the ribosomal stalk which helps the ribosome interact with GTP-bound translation factors. This chain is Large ribosomal subunit protein uL11c, found in Guillardia theta (Cryptophyte).